Reading from the N-terminus, the 431-residue chain is Enolase (431 aa).

Glutamine 163 contributes to the (2R)-2-phosphoglycerate binding site. Glutamate 205 serves as the catalytic Proton donor. Positions 242, 288, and 315 each coordinate Mg(2+). Residues lysine 340, arginine 369, serine 370, and lysine 391 each contribute to the (2R)-2-phosphoglycerate site. Lysine 340 (proton acceptor) is an active-site residue.

This sequence belongs to the enolase family. The cofactor is Mg(2+).

The protein localises to the cytoplasm. Its subcellular location is the secreted. It is found in the cell surface. It carries out the reaction (2R)-2-phosphoglycerate = phosphoenolpyruvate + H2O. It participates in carbohydrate degradation; glycolysis; pyruvate from D-glyceraldehyde 3-phosphate: step 4/5. Functionally, catalyzes the reversible conversion of 2-phosphoglycerate (2-PG) into phosphoenolpyruvate (PEP). It is essential for the degradation of carbohydrates via glycolysis. This chain is Enolase, found in Bacillus cereus (strain B4264).